Consider the following 355-residue polypeptide: Aurora kinase (355 aa).

The region spanning 89 to 340 (FEIGKPLGKG…LEQVMRHPWI (252 aa)) is the Protein kinase domain. Residues 95–103 (LGKGKFGRV) and lysine 118 contribute to the ATP site. The active-site Proton acceptor is the aspartate 212.

The protein belongs to the protein kinase superfamily. Ser/Thr protein kinase family. Aurora subfamily. Component of the CPC complex at least composed of ark1, bir1 and pic1. Interacts with the mitotic checkpoint complex (MCC) subunit mad3.

Its subcellular location is the nucleus. It localises to the cytoplasm. It is found in the cytoskeleton. The protein localises to the spindle. The enzyme catalyses L-seryl-[protein] + ATP = O-phospho-L-seryl-[protein] + ADP + H(+). The catalysed reaction is L-threonyl-[protein] + ATP = O-phospho-L-threonyl-[protein] + ADP + H(+). In terms of biological role, component of the chromosomal passenger complex (CPC), a complex that acts as a key regulator of chromosome segregation and cytokinesis. Has a role in error-correction of aberrent kinetochore-microtubule attachments to ensure that sister kinetochores become bioriented and connect to opposite poles by promoting spindle assembly checkpoint signaling. Ark1 is also required for phosphorylation of histone H3 that accompanies chromosome condensation and condensin recruitment to mitotic chromatin. This Schizosaccharomyces pombe (strain 972 / ATCC 24843) (Fission yeast) protein is Aurora kinase (ark1).